The primary structure comprises 248 residues: Phosphatidylserine decarboxylase proenzyme (248 aa).

Ser-206 (schiff-base intermediate with substrate; via pyruvic acid) is an active-site residue. The residue at position 206 (Ser-206) is a Pyruvic acid (Ser); by autocatalysis.

Belongs to the phosphatidylserine decarboxylase family. PSD-A subfamily. As to quaternary structure, heterodimer of a large membrane-associated beta subunit and a small pyruvoyl-containing alpha subunit. Pyruvate serves as cofactor. Post-translationally, is synthesized initially as an inactive proenzyme. Formation of the active enzyme involves a self-maturation process in which the active site pyruvoyl group is generated from an internal serine residue via an autocatalytic post-translational modification. Two non-identical subunits are generated from the proenzyme in this reaction, and the pyruvate is formed at the N-terminus of the alpha chain, which is derived from the carboxyl end of the proenzyme. The post-translation cleavage follows an unusual pathway, termed non-hydrolytic serinolysis, in which the side chain hydroxyl group of the serine supplies its oxygen atom to form the C-terminus of the beta chain, while the remainder of the serine residue undergoes an oxidative deamination to produce ammonia and the pyruvoyl prosthetic group on the alpha chain.

It is found in the cell membrane. The catalysed reaction is a 1,2-diacyl-sn-glycero-3-phospho-L-serine + H(+) = a 1,2-diacyl-sn-glycero-3-phosphoethanolamine + CO2. The protein operates within phospholipid metabolism; phosphatidylethanolamine biosynthesis; phosphatidylethanolamine from CDP-diacylglycerol: step 2/2. Its function is as follows. Catalyzes the formation of phosphatidylethanolamine (PtdEtn) from phosphatidylserine (PtdSer). This chain is Phosphatidylserine decarboxylase proenzyme, found in Nitrobacter hamburgensis (strain DSM 10229 / NCIMB 13809 / X14).